The primary structure comprises 85 residues: U4-theraphotoxin-Hhn1q (85 aa).

The N-terminal stretch at 1 to 22 (MKVTLIAILTCAAVLVLHTTAA) is a signal peptide. Residues 23 to 48 (EELEAESQLMEVGMPDTELAAVDEER) constitute a propeptide that is removed on maturation. Disulfide bonds link Cys52–Cys66, Cys56–Cys77, and Cys71–Cys82.

Belongs to the neurotoxin 12 (Hwtx-2) family. 02 (Hwtx-2) subfamily. In terms of tissue distribution, expressed by the venom gland.

Its subcellular location is the secreted. Its function is as follows. Postsynaptic neurotoxin. In Cyriopagopus hainanus (Chinese bird spider), this protein is U4-theraphotoxin-Hhn1q.